The following is a 75-amino-acid chain: Translational regulator CsrA (75 aa).

The protein belongs to the CsrA/RsmA family. In terms of assembly, homodimer; the beta-strands of each monomer intercalate to form a hydrophobic core, while the alpha-helices form wings that extend away from the core.

It localises to the cytoplasm. In terms of biological role, a translational regulator that binds mRNA to regulate translation initiation and/or mRNA stability. Usually binds in the 5'-UTR at or near the Shine-Dalgarno sequence preventing ribosome-binding, thus repressing translation. Its main target seems to be the major flagellin gene, while its function is anatagonized by FliW. The protein is Translational regulator CsrA of Exiguobacterium sibiricum (strain DSM 17290 / CCUG 55495 / CIP 109462 / JCM 13490 / 255-15).